Reading from the N-terminus, the 145-residue chain is MHPRPEHLSPTLNHNHRLKLKQPATTSRMLARTILATLVSAACFATVNAQTCSATNAVCCQQLQDPDNLNADALNLLRLLNINPNTLTGAVGLTCKRLTEACFACLLLTRPGTSLVSGSCNANAACCTGNNYNGLIVLGCTQIQV.

Intrachain disulfides connect Cys43–Cys126, Cys59–Cys120, Cys60–Cys95, and Cys127–Cys140.

This sequence belongs to the fungal hydrophobin family. As to quaternary structure, self-assembles to form functional amyloid fibrils called rodlets. Self-assembly into fibrillar rodlets occurs spontaneously at hydrophobic:hydrophilic interfaces and the rodlets further associate laterally to form amphipathic monolayers.

Aerial growth, conidiation, and dispersal of filamentous fungi in the environment rely upon a capability of their secreting small amphipathic proteins called hydrophobins (HPBs) with low sequence identity. Class I can self-assemble into an outermost layer of rodlet bundles on aerial cell surfaces, conferring cellular hydrophobicity that supports fungal growth, development and dispersal; whereas Class II form highly ordered films at water-air interfaces through intermolecular interactions but contribute nothing to the rodlet structure. RodE is a class I hydrophobin that, unlike rodA, is not required for rodlet formation. This is Class I hydrophobin rodE from Aspergillus fumigatus (strain ATCC MYA-4609 / CBS 101355 / FGSC A1100 / Af293) (Neosartorya fumigata).